The following is a 355-amino-acid chain: F-box only protein 32 (355 aa).

The Nuclear localization signal motif lies at 62 to 67 (KKRKKD). A Nuclear export signal motif is present at residues 169–173 (LLQTL). An F-box domain is found at 223-271 (LTFTDLPLCLQLNIMQRLSDGRDLVSLGQVAPDLHVLSEDRLLWKKLCQ). Residues 280 to 295 (RKRLILSDKGQLDWKK) carry the Bipartite nuclear localization signal motif.

As to quaternary structure, part of the SCF (SKP1-CUL1-F-box) E3 ubiquitin-protein ligase complex SCF(FBXO32) formed of CUL1, SKP1, RBX1 and FBXO32.

It is found in the cytoplasm. Its subcellular location is the nucleus. It participates in protein modification; protein ubiquitination. In terms of biological role, substrate recognition component of a SCF (SKP1-CUL1-F-box protein) E3 ubiquitin-protein ligase complex which mediates the ubiquitination and subsequent proteasomal degradation of target proteins. Probably recognizes and binds to phosphorylated target proteins during skeletal muscle atrophy. Recognizes TERF1. This Sus scrofa (Pig) protein is F-box only protein 32 (FBXO32).